The following is a 424-amino-acid chain: Dihydroorotase (424 aa).

His-61 and His-63 together coordinate Zn(2+). Substrate contacts are provided by residues 63-65 (HLR) and Asn-95. Residues Asp-153, His-180, and His-233 each coordinate Zn(2+). A substrate-binding site is contributed by Asn-279. Asp-306 is a Zn(2+) binding site. Asp-306 is an active-site residue. His-310 serves as a coordination point for substrate.

The protein belongs to the metallo-dependent hydrolases superfamily. DHOase family. Class I DHOase subfamily. Requires Zn(2+) as cofactor.

The catalysed reaction is (S)-dihydroorotate + H2O = N-carbamoyl-L-aspartate + H(+). Its pathway is pyrimidine metabolism; UMP biosynthesis via de novo pathway; (S)-dihydroorotate from bicarbonate: step 3/3. Functionally, catalyzes the reversible cyclization of carbamoyl aspartate to dihydroorotate. This chain is Dihydroorotase, found in Geobacter metallireducens (strain ATCC 53774 / DSM 7210 / GS-15).